The chain runs to 148 residues: MRKLDRVDMQLVKILSENSRLTYRELADILNTTRQRIARRIDKLKKLGIIRKFTIIPDIDKLGYMYAIVLIKSKVPSDADKVISEISDIEYVKSVEKGVGRYNIIVRLLLPKDIKDAENLISEFLQRIKNAENVEVILISEVRKFEII.

In terms of domain architecture, HTH asnC-type spans 4 to 65 (LDRVDMQLVK…IPDIDKLGYM (62 aa)). Positions 23–42 (YRELADILNTTRQRIARRID) form a DNA-binding region, H-T-H motif.

This is an uncharacterized protein from Pyrococcus horikoshii (strain ATCC 700860 / DSM 12428 / JCM 9974 / NBRC 100139 / OT-3).